The primary structure comprises 248 residues: Triosephosphate isomerase (248 aa).

Residue 9-11 (NWK) participates in substrate binding. The Electrophile role is filled by histidine 94. Glutamate 166 serves as the catalytic Proton acceptor. Residues glycine 172, serine 211, and 232–233 (GG) each bind substrate.

The protein belongs to the triosephosphate isomerase family. As to quaternary structure, homodimer.

The protein resides in the cytoplasm. It catalyses the reaction D-glyceraldehyde 3-phosphate = dihydroxyacetone phosphate. It participates in carbohydrate biosynthesis; gluconeogenesis. The protein operates within carbohydrate degradation; glycolysis; D-glyceraldehyde 3-phosphate from glycerone phosphate: step 1/1. In terms of biological role, involved in the gluconeogenesis. Catalyzes stereospecifically the conversion of dihydroxyacetone phosphate (DHAP) to D-glyceraldehyde-3-phosphate (G3P). In Vesicomyosocius okutanii subsp. Calyptogena okutanii (strain HA), this protein is Triosephosphate isomerase.